Consider the following 953-residue polypeptide: Nonsense-mediated mRNA decay factor SMG8 (953 aa).

2 disordered regions span residues 571-604 and 629-653; these read AQDA…CSQP and PCFD…ESNN. Residues 574–586 are compositionally biased toward acidic residues; sequence AELDPDEEDEELP. Residues 595–604 show a composition bias toward polar residues; the sequence is ITQSNGCSQP. Residues 634 to 653 show a composition bias toward low complexity; the sequence is SSSSEAESTCSGTSSEESNN.

The protein belongs to the SMG8 family.

In terms of biological role, involved in nonsense-mediated decay (NMD) of mRNAs containing premature stop codons. Probable component of kinase complex containing nonC and recruited to stalled ribosomes. The chain is Nonsense-mediated mRNA decay factor SMG8 from Drosophila persimilis (Fruit fly).